Consider the following 72-residue polypeptide: Disintegrin cereberin (72 aa).

In terms of domain architecture, Disintegrin spans 1-72; it reads EAGEECDCGS…SADCPRNRFH (72 aa). 6 cysteine pairs are disulfide-bonded: Cys6–Cys21, Cys8–Cys16, Cys15–Cys38, Cys29–Cys35, Cys34–Cys59, and Cys47–Cys66. Positions 51-53 match the Cell attachment site motif; sequence RGD. The disordered stretch occupies residues 51–72; sequence RGDNPDDRCTGQSADCPRNRFH.

Belongs to the venom metalloproteinase (M12B) family. P-II subfamily. P-IIa sub-subfamily. Monomer (disintegrin). Expressed by the venom gland.

Its subcellular location is the secreted. Its function is as follows. Inhibits fibrinogen interaction with platelet. Acts by binding to alpha-IIb/beta-3 (ITGA2B/ITGB3) on the platelet surface and inhibits aggregation induced by ADP, thrombin, platelet-activating factor and collagen. In Crotalus cerberus (Arizona black rattlesnake), this protein is Disintegrin cereberin.